Consider the following 113-residue polypeptide: Pancreatic progenitor cell differentiation and proliferation factor A (113 aa).

Belongs to the PPDPF family.

Probable regulator of exocrine pancreas development. This chain is Pancreatic progenitor cell differentiation and proliferation factor A (ppdpf-a), found in Xenopus laevis (African clawed frog).